An 865-amino-acid polypeptide reads, in one-letter code: Catenin alpha-2 (865 aa).

Basic and acidic residues predominate over residues 823–839; the sequence is PEKKPLVKREKPEECQT. The disordered stretch occupies residues 823–851; that stretch reads PEKKPLVKREKPEECQTRVRRGSQKKHIS. The span at 840–850 shows a compositional bias: basic residues; that stretch reads RVRRGSQKKHI.

The protein belongs to the vinculin/alpha-catenin family.

It is found in the cell membrane. The protein localises to the cytoplasm. The protein resides in the cytoskeleton. It localises to the cell junction. Its subcellular location is the adherens junction. It is found in the cell projection. The protein localises to the axon. The protein resides in the nucleus. Its function is as follows. May function as a linker between cadherin adhesion receptors and the cytoskeleton to regulate cell-cell adhesion and differentiation in the nervous system. This chain is Catenin alpha-2 (Ctnna2), found in Danio rerio (Zebrafish).